A 146-amino-acid chain; its full sequence is Large ribosomal subunit protein uL15 (146 aa).

Residues 1-13 (MKLHELHSAEGSR) show a composition bias toward basic and acidic residues. The segment at 1–55 (MKLHELHSAEGSRRNRKRVGRGTSSGYGKTSGRGQKGQLARQGGHTRLGFEGGQM) is disordered. Residues 23 to 35 (TSSGYGKTSGRGQ) show a composition bias toward gly residues.

This sequence belongs to the universal ribosomal protein uL15 family. In terms of assembly, part of the 50S ribosomal subunit.

In terms of biological role, binds to the 23S rRNA. The chain is Large ribosomal subunit protein uL15 from Lactobacillus acidophilus (strain ATCC 700396 / NCK56 / N2 / NCFM).